Here is a 566-residue protein sequence, read N- to C-terminus: Oxygen-dependent choline dehydrogenase (566 aa).

7–36 (DYIICGAGSAGNVLATRLTEDPNVTVLLLE) is an FAD binding site. Residues 182-204 (YQQEGFGPMDRTVTPKGRRASTA) are disordered. Histidine 474 serves as the catalytic Proton acceptor.

The protein belongs to the GMC oxidoreductase family. Requires FAD as cofactor.

It carries out the reaction choline + A = betaine aldehyde + AH2. The enzyme catalyses betaine aldehyde + NAD(+) + H2O = glycine betaine + NADH + 2 H(+). The protein operates within amine and polyamine biosynthesis; betaine biosynthesis via choline pathway; betaine aldehyde from choline (cytochrome c reductase route): step 1/1. Its function is as follows. Involved in the biosynthesis of the osmoprotectant glycine betaine. Catalyzes the oxidation of choline to betaine aldehyde and betaine aldehyde to glycine betaine at the same rate. In Burkholderia multivorans (strain ATCC 17616 / 249), this protein is Oxygen-dependent choline dehydrogenase.